A 735-amino-acid polypeptide reads, in one-letter code: Disintegrin and metalloproteinase domain-containing protein 2 (735 aa).

The first 15 residues, 1 to 15, serve as a signal peptide directing secretion; the sequence is MLCLLLLLCGLASLG. Positions 16–176 are excised as a propeptide; the sequence is GPLKKYVENS…KIKSIKSSVR (161 aa). Residues 16–680 are Extracellular-facing; sequence GPLKKYVENS…EGAYHTKSRK (665 aa). Asn-55, Asn-220, and Asn-288 each carry an N-linked (GlcNAc...) asparagine glycan. Residues 178–375 form the Peptidase M12B domain; that stretch reads HYIEMHIIVE…QVSQCLQNQP (198 aa). 4 disulfide bridges follow: Cys-287/Cys-370, Cys-329/Cys-354, Cys-331/Cys-336, and Cys-442/Cys-455. The N-linked (GlcNAc...) asparagine glycan is linked to Asn-353. One can recognise a Disintegrin domain in the interval 384-470; sequence NPVCGNNRVE…ACQEDLYVIN (87 aa). N-linked (GlcNAc...) asparagine glycosylation is found at Asn-456 and Asn-564. Positions 610–643 constitute an EGF-like domain; sequence LGYDCTPATCSDHGVCNNKRHCHCNPTYVPPNCE. Disulfide bonds link Cys-614–Cys-625, Cys-619–Cys-631, and Cys-633–Cys-642. Residues 681–701 form a helical membrane-spanning segment; sequence WPFFLIIPFFVIFSVLVATVV. At 702-735 the chain is on the cytoplasmic side; it reads KVYYQKKKWKTEDYANDENIESESEPKSSKVSSK. Positions 716–735 are disordered; the sequence is ANDENIESESEPKSSKVSSK. Position 723 is a phosphoserine (Ser-723).

Heterodimer with ADAM1/fertilin subunit alpha. Post-translationally, the signal and the metalloprotease domain are cleaved during the epididymal maturation of the spermatozoa. In terms of tissue distribution, expressed specifically in testis.

It localises to the membrane. Its function is as follows. Sperm surface membrane protein that may be involved in sperm-egg plasma membrane adhesion and fusion during fertilization. Could have a direct role in sperm-zona binding or migration of sperm from the uterus into the oviduct. Interactions with egg membrane could be mediated via binding between its disintegrin-like domain to one or more integrins receptors on the egg. This is a non catalytic metalloprotease-like protein. In Cavia porcellus (Guinea pig), this protein is Disintegrin and metalloproteinase domain-containing protein 2 (ADAM2).